Reading from the N-terminus, the 139-residue chain is Putative pre-16S rRNA nuclease (139 aa).

The protein belongs to the YqgF nuclease family.

The protein localises to the cytoplasm. Could be a nuclease involved in processing of the 5'-end of pre-16S rRNA. The polypeptide is Putative pre-16S rRNA nuclease (Streptococcus thermophilus (strain ATCC BAA-491 / LMD-9)).